Consider the following 205-residue polypeptide: Putative 3-methyladenine DNA glycosylase (205 aa).

The protein belongs to the DNA glycosylase MPG family.

The polypeptide is Putative 3-methyladenine DNA glycosylase (Bacillus cereus (strain B4264)).